Reading from the N-terminus, the 47-residue chain is Large ribosomal subunit protein bL34 (47 aa).

Belongs to the bacterial ribosomal protein bL34 family.

This is Large ribosomal subunit protein bL34 from Mycobacterium sp. (strain JLS).